The following is a 451-amino-acid chain: Signal transduction histidine-protein kinase ArlS (451 aa).

2 helical membrane passes run 11–31 (IIVT…IIIF) and 156–176 (IIAL…SYVF). The 54-residue stretch at 178–231 (TQITKPLVSLSNKMIEIRRDGFQNKLQLNTNYEEIDNLANTFNEMMSQIEESFN) folds into the HAMP domain. Residues 239 to 451 (DASHELRTPL…NKGTTFKIIF (213 aa)) form the Histidine kinase domain. H242 carries the phosphohistidine; by autocatalysis modification.

Post-translationally, autophosphorylated.

Its subcellular location is the cell membrane. The enzyme catalyses ATP + protein L-histidine = ADP + protein N-phospho-L-histidine.. Its function is as follows. Member of the two-component regulatory system ArlS/ArlR involved in the regulation of adhesion, autolysis, multidrug resistance and virulence. ArlS probably functions as a sensor protein kinase which is autophosphorylated at a histidine residue and transfers its phosphate group to ArlR. The chain is Signal transduction histidine-protein kinase ArlS (arlS) from Staphylococcus aureus (strain USA300).